Reading from the N-terminus, the 91-residue chain is Potassium channel toxin BuTXK-beta (91 aa).

The signal sequence occupies residues 1 to 20 (MQRNLVVLLLLGMVALSSCG). The propeptide occupies 21-27 (LREKHFQ). Positions 54–91 (QFGCPAYQGYCDDHCQDIKKEEGFCHGMKCKCGIPMGF) constitute a BetaSPN-type CS-alpha/beta domain. 3 disulfide bridges follow: cysteine 57/cysteine 78, cysteine 64/cysteine 83, and cysteine 68/cysteine 85.

The protein belongs to the long chain scorpion toxin family. Class 1 subfamily. In terms of tissue distribution, expressed by the venom gland.

It localises to the secreted. In terms of biological role, inhibits voltage-gated potassium channel. In Buthus israelis (Israeli scorpion), this protein is Potassium channel toxin BuTXK-beta.